The primary structure comprises 336 residues: dTDP-glucose 4,6-dehydratase (336 aa).

NAD(+)-binding positions include Gly-7–Gly-13, Asp-37–Thr-40, and Asp-63–Ile-64. Residue Thr-87 participates in substrate binding. Thr-102 is a binding site for NAD(+). Residue Thr-127 to Glu-129 coordinates substrate. The Proton donor role is filled by Asp-128. Active-site proton acceptor residues include Glu-129 and Tyr-151. Position 151 to 155 (Tyr-151 to Lys-155) interacts with NAD(+). Residue Asn-180 coordinates substrate. NAD(+) is bound at residue Asn-181. Substrate contacts are provided by residues Lys-190–Leu-191, Pro-206–Tyr-208, Arg-215, Asn-250, and Arg-274–His-277.

The protein belongs to the NAD(P)-dependent epimerase/dehydratase family. dTDP-glucose dehydratase subfamily. Homodimer. It depends on NAD(+) as a cofactor.

It catalyses the reaction dTDP-alpha-D-glucose = dTDP-4-dehydro-6-deoxy-alpha-D-glucose + H2O. Its pathway is antibiotic biosynthesis; novobiocin biosynthesis. Functionally, dTDP-glucose 4,6-dehydratase involved in the generation of the deoxysugar in the novobiocin biosynthesis pathway, an aminocoumarin family antibiotic that targets bacterial DNA gyrases. The protein is dTDP-glucose 4,6-dehydratase (novT) of Streptomyces niveus (Streptomyces spheroides).